A 138-amino-acid polypeptide reads, in one-letter code: Cysteine desulfuration protein SufE (138 aa).

Cys-51 (cysteine persulfide intermediate) is an active-site residue.

It belongs to the SufE family. As to quaternary structure, homodimer. Interacts with SufS.

It is found in the cytoplasm. It participates in cofactor biosynthesis; iron-sulfur cluster biosynthesis. In terms of biological role, participates in cysteine desulfuration mediated by SufS. Cysteine desulfuration mobilizes sulfur from L-cysteine to yield L-alanine and constitutes an essential step in sulfur metabolism for biosynthesis of a variety of sulfur-containing biomolecules. Functions as a sulfur acceptor for SufS, by mediating the direct transfer of the sulfur atom from the S-sulfanylcysteine of SufS, an intermediate product of cysteine desulfuration process. This Escherichia coli O17:K52:H18 (strain UMN026 / ExPEC) protein is Cysteine desulfuration protein SufE.